A 307-amino-acid chain; its full sequence is UDP-N-acetylenolpyruvoylglucosamine reductase (307 aa).

The FAD-binding PCMH-type domain maps to 33–197 (TGGNADFYIT…LEAAFTLAPG (165 aa)). Residue arginine 176 is part of the active site. The Proton donor role is filled by serine 226. Residue glutamate 296 is part of the active site.

The protein belongs to the MurB family. The cofactor is FAD.

Its subcellular location is the cytoplasm. The enzyme catalyses UDP-N-acetyl-alpha-D-muramate + NADP(+) = UDP-N-acetyl-3-O-(1-carboxyvinyl)-alpha-D-glucosamine + NADPH + H(+). Its pathway is cell wall biogenesis; peptidoglycan biosynthesis. Functionally, cell wall formation. The chain is UDP-N-acetylenolpyruvoylglucosamine reductase from Staphylococcus aureus (strain Mu3 / ATCC 700698).